The chain runs to 156 residues: Small ribosomal subunit protein uS7 (156 aa).

The protein belongs to the universal ribosomal protein uS7 family. Part of the 30S ribosomal subunit. Contacts proteins S9 and S11.

Its function is as follows. One of the primary rRNA binding proteins, it binds directly to 16S rRNA where it nucleates assembly of the head domain of the 30S subunit. Is located at the subunit interface close to the decoding center, probably blocks exit of the E-site tRNA. This chain is Small ribosomal subunit protein uS7, found in Micrococcus luteus (strain ATCC 4698 / DSM 20030 / JCM 1464 / CCM 169 / CCUG 5858 / IAM 1056 / NBRC 3333 / NCIMB 9278 / NCTC 2665 / VKM Ac-2230) (Micrococcus lysodeikticus).